A 344-amino-acid polypeptide reads, in one-letter code: MSKPNVLDIRLATFEDSIVDLVINGLRKQPKTLPALLFYANEGLKHWNHHSHQPEFYPRHQEVQILKKKAQEMAASIPMNSVVVDLGSASLDKVIHLLEALEVQKKNISYYALDVSASQLESTLAAIPTQNFRHVRFAGLHGTFDDGLHWLKEAPEARDVPHTVLLFGLTIGNFSRPNAAAFLSNIGQHAFQGKSGDQCSILMSLDSCKVPTQVLRAYTCEGVVPFALQSLTYANGLFSEKNKTQASGDVQHKVFNLDEWYYLSEWNFVLGRHEASLIPRSKDIKLLPPLDGILVSKDEKVRFGCSYKYDQEERMELFAAAGVKNEVTWSDEGCDVAFYQLKLS.

Belongs to the methyltransferase superfamily. Homodimer.

It catalyses the reaction 4-(3-methylbut-2-enyl)-L-tryptophan + S-adenosyl-L-methionine = 4-(3-methylbut-2-enyl)-L-abrine + S-adenosyl-L-homocysteine + H(+). The protein operates within alkaloid biosynthesis; ergot alkaloid biosynthesis. In terms of biological role, 4-dimethylallyltryptophan N-methyltransferase; part of the gene cluster that mediates the biosynthesis of fungal ergot alkaloid ergovaline, the predominant ergopeptine product in E.festucae var. lolii. DmaW catalyzes the first step of ergot alkaloid biosynthesis by condensing dimethylallyl diphosphate (DMAP) and tryptophan to form 4-dimethylallyl-L-tryptophan. The second step is catalyzed by the methyltransferase easF that methylates 4-dimethylallyl-L-tryptophan in the presence of S-adenosyl-L-methionine, resulting in the formation of 4-dimethylallyl-L-abrine. The catalase easC and the FAD-dependent oxidoreductase easE then transform 4-dimethylallyl-L-abrine to chanoclavine-I which is further oxidized by easD in the presence of NAD(+), resulting in the formation of chanoclavine-I aldehyde. Agroclavine dehydrogenase easG then mediates the conversion of chanoclavine-I aldehyde to agroclavine via a non-enzymatic adduct reaction: the substrate is an iminium intermediate that is formed spontaneously from chanoclavine-I aldehyde in the presence of glutathione. The presence of easA is not required to complete this reaction. Further conversion of agroclavine to paspalic acid is a two-step process involving oxidation of agroclavine to elymoclavine and of elymoclavine to paspalic acid, the second step being performed by the elymoclavine oxidase cloA. Paspalic acid is then further converted to D-lysergic acid. Ergovaline is assembled from D-lysergic acid and three different amino acids by the D-lysergyl-peptide-synthetase composed of a monomudular (lpsB) and a trimodular (lpsA) nonribosomal peptide synthetase subunit. The chain is 4-dimethylallyltryptophan N-methyltransferase easF from Epichloe festucae var. lolii (Neotyphodium lolii).